A 68-amino-acid polypeptide reads, in one-letter code: Large ribosomal subunit protein uL29 (68 aa).

It belongs to the universal ribosomal protein uL29 family.

The polypeptide is Large ribosomal subunit protein uL29 (Maricaulis maris (strain MCS10) (Caulobacter maris)).